A 251-amino-acid chain; its full sequence is MNLISIPALQDNYIWLLSNKENRCVIVDPGEASPVLDALAQHALFPEAILLTHHHNDHVGGVHELLKHYPNLPVFGPKETAKCGATSLLEEGNTVSLLNSEFSVIEVPGHTSGHIAYYNAPFLFCGDTLFSAGCGRIFEGTPRQMYESIQKIAVLPDDTVICCAHEYTLSNLRFSNAIWPEDQSIEAYLHEISQIREKSQSSLPTTLGLERRINLFLRCHELDLKRKLSKEPENIENWQVFEMLRSKKDCF.

The Zn(2+) site is built by His-53, His-55, Asp-57, His-58, His-110, Asp-127, and His-165.

This sequence belongs to the metallo-beta-lactamase superfamily. Glyoxalase II family. As to quaternary structure, monomer. The cofactor is Zn(2+).

It catalyses the reaction an S-(2-hydroxyacyl)glutathione + H2O = a 2-hydroxy carboxylate + glutathione + H(+). It functions in the pathway secondary metabolite metabolism; methylglyoxal degradation; (R)-lactate from methylglyoxal: step 2/2. Functionally, thiolesterase that catalyzes the hydrolysis of S-D-lactoyl-glutathione to form glutathione and D-lactic acid. The sequence is that of Hydroxyacylglutathione hydrolase from Pectobacterium carotovorum subsp. carotovorum (strain PC1).